The chain runs to 194 residues: Adenylate kinase (194 aa).

An ATP-binding site is contributed by 12–17 (GSGKTT). Residues 34–63 (STGDLLREEVKKGTPLGATIASFIDNGQLV) are NMP. Residues Thr35, Arg40, 61–63 (QLV), 88–91 (GFPR), and Gln95 each bind AMP. An LID region spans residues 130 to 136 (GRARGAD). Arg131 is an ATP binding site. 2 residues coordinate AMP: Arg133 and Arg145. ATP is bound at residue Arg173.

It belongs to the adenylate kinase family. In terms of assembly, monomer.

The protein localises to the cytoplasm. The enzyme catalyses AMP + ATP = 2 ADP. It functions in the pathway purine metabolism; AMP biosynthesis via salvage pathway; AMP from ADP: step 1/1. Its function is as follows. Catalyzes the reversible transfer of the terminal phosphate group between ATP and AMP. Plays an important role in cellular energy homeostasis and in adenine nucleotide metabolism. This is Adenylate kinase from Nitratiruptor sp. (strain SB155-2).